The chain runs to 688 residues: Envelope glycoprotein gp70 (688 aa).

The first 98 residues, 1-98 (MPNHQSGSPT…SVLGPPPVSG (98 aa)), serve as a signal peptide directing secretion. At 99–624 (ESYWAYLPKP…ALNPLDWTQY (526 aa)) the chain is on the extracellular side. N-linked (GlcNAc...) asparagine; by host glycans are attached at residues Asn-127 and Asn-143. Residues 426-474 (LLPVDIGDEPWFDDSAIQTFRYATDLIRAKRFVAAIILGISALIAIITS) are a coiled coil. Positions 455–456 (KR) are excised as a propeptide. Residues 457 to 477 (FVAAIILGISALIAIITSFAV) are fusion peptide. Residues 463-481 (LGISALIAIITSFAVATTA) form an immunosuppression region. The N-linked (GlcNAc...) asparagine; by host glycan is linked to Asn-498. Positions 511–541 (LKLEARLNALEEVVLDLGQDVANLKTRMSTR) form a coiled coil. N-linked (GlcNAc...) asparagine; by host glycosylation occurs at Asn-557. The chain crosses the membrane as a helical span at residues 625–645 (FIFIGVGALLLVIVLMIFPIV). The Cytoplasmic segment spans residues 646–688 (FQCLAKSLDQVQSDLNVLLLKKKKGGNAAPAAEMVELPRVSYT).

In terms of assembly, the mature envelope protein (Env) consists of a trimer of SU-TM heterodimers attached by non-covalent interactions or by a labile interchain disulfide bond. Post-translationally, specific enzymatic cleavages in vivo yield mature proteins. Envelope glycoproteins are synthesized as an inactive precursor that is N-glycosylated and processed likely by host cell furin or by a furin-like protease in the Golgi to yield the mature SU and TM proteins. The cleavage site between SU and TM requires the minimal sequence [KR]-X-[KR]-R.

The protein localises to the virion membrane. It localises to the host cell membrane. Functionally, the surface protein (SU) attaches the virus to the host cell by binding to its receptor. This interaction triggers the refolding of the transmembrane protein (TM) and is thought to activate its fusogenic potential by unmasking its fusion peptide. Fusion occurs at the host cell plasma membrane. In terms of biological role, the transmembrane protein (TM) acts as a class I viral fusion protein. Under the current model, the protein has at least 3 conformational states: pre-fusion native state, pre-hairpin intermediate state, and post-fusion hairpin state. During viral and target cell membrane fusion, the coiled coil regions (heptad repeats) assume a trimer-of-hairpins structure, positioning the fusion peptide in close proximity to the C-terminal region of the ectodomain. The formation of this structure appears to drive apposition and subsequent fusion of viral and target cell membranes. Membranes fusion leads to delivery of the nucleocapsid into the cytoplasm. In Mouse mammary tumor virus (strain C3H) (MMTV), this protein is Envelope glycoprotein gp70 (env).